We begin with the raw amino-acid sequence, 308 residues long: 26S proteasome non-ATPase regulatory subunit 14 (308 aa).

The MPN domain maps to 29–164; sequence VYISSLALLK…IDAFRLINPN (136 aa). Zn(2+)-binding residues include histidine 111, histidine 113, and aspartate 124. The JAMM motif motif lies at 111-124; sequence HSHPGFGCWLSGVD.

It belongs to the peptidase M67A family. PSMD14 subfamily. Component of the 19S regulatory cap of the 26S proteasome.

In terms of biological role, metalloprotease component of the 26S proteasome that specifically cleaves 'Lys-63'-linked polyubiquitin chains. The 26S proteasome is involved in the ATP-dependent degradation of ubiquitinated proteins. The function of the 'Lys-63'-specific deubiquitination of the proteasome is unclear. In Drosophila melanogaster (Fruit fly), this protein is 26S proteasome non-ATPase regulatory subunit 14 (Rpn11).